A 493-amino-acid chain; its full sequence is Sorting nexin-4 (493 aa).

Residues 1 to 77 (MAVIDQDNFS…ILDCTVSDPH (77 aa)) form a disordered region. A compositionally biased stretch (polar residues) spans 7 to 28 (DNFSNISWHSEQNAESAASTAQ). The span at 56–65 (MEHDELDHSG) shows a compositional bias: basic and acidic residues. The PX domain maps to 68 to 190 (ILDCTVSDPH…AFLESPDWNA (123 aa)). Arginine 111, threonine 113, lysine 137, and arginine 156 together coordinate a 1,2-diacyl-sn-glycero-3-phospho-(1D-myo-inositol-3-phosphate). 3 coiled-coil regions span residues 248–292 (EIKE…QKLI), 338–363 (SGTL…EYLN), and 405–442 (EQAR…QVSR).

Belongs to the sorting nexin family.

The protein resides in the cytoplasm. The protein localises to the membrane. It is found in the endosome membrane. Sorting nexin, involved in the separation or division of vacuoles throughout the entire life cycle of the cells. Involved in retrieval of late-Golgi SNAREs from post-Golgi endosomes to the trans-Golgi network, for cytoplasm to vacuole transport (Cvt), and autophagy of large cargos including mitophagy, pexophagy and glycophagy. This Neurospora crassa (strain ATCC 24698 / 74-OR23-1A / CBS 708.71 / DSM 1257 / FGSC 987) protein is Sorting nexin-4 (vsp-5).